A 402-amino-acid polypeptide reads, in one-letter code: Protein PMR5 (402 aa).

The helical; Signal-anchor for type II membrane protein transmembrane segment at 7-23 (LLGISVVSAIFFLVLQQ) threads the bilayer. The interval 40 to 60 (GSSSGSSGNQYSSSRPSAGFQ) is disordered. The segment covering 41-56 (SSSGSSGNQYSSSRPS) has biased composition (low complexity). A GDS motif motif is present at residues 140-142 (GDS). The DCXHWCLPGXXDXWN motif signature appears at 379–393 (DCSHWCLPGLPDTWN).

It belongs to the PC-esterase family. TBL subfamily. As to expression, expressed in flowers, siliques, stems and leaves.

The protein resides in the membrane. Required for nonhost resistance (NHR) during plant-microbe interactions. Plants mutated in PMR5 are resistant to powdery mildew species. May act as a bridging protein that binds pectin and other cell wall polysaccharides. Probably involved in maintaining esterification of pectins. May be involved in the specific O-acetylation of cell wall polymers. The sequence is that of Protein PMR5 (PMR5) from Arabidopsis thaliana (Mouse-ear cress).